A 199-amino-acid chain; its full sequence is Heparin-binding hemagglutinin (199 aa).

Positions 162 to 180 (KAAPAKKAAPAKKAAPAKK) are enriched in low complexity. Positions 162 to 199 (KAAPAKKAAPAKKAAPAKKAAAKKAPAKKAAAKKVTQK) are disordered. A compositionally biased stretch (basic residues) spans 181–199 (AAAKKAPAKKAAAKKVTQK).

This sequence to M.leprae HbhA. Glycosylated. Glycosylation may protect the protein from proteolytic degradation and be important for hemagglutination. It suggests that the carbohydrate moiety may be located within the C-terminal domain of HbhA.

Its subcellular location is the cell surface. Its function is as follows. Required for extrapulmonary dissemination. Mediates adherence to epithelial cells by binding to sulfated glycoconjugates present at the surface of these cells. In Mycobacterium tuberculosis (strain CDC 1551 / Oshkosh), this protein is Heparin-binding hemagglutinin (hbhA).